A 1714-amino-acid polypeptide reads, in one-letter code: Latrophilin Cirl (1714 aa).

Over 1 to 765 (MSSIDISGRY…LFTMFDGNMR (765 aa)) the chain is Extracellular. The region spanning 26 to 115 (ACEGKKLTIE…KYLEAHYQCI (90 aa)) is the SUEL-type lectin domain. N-linked (GlcNAc...) asparagine glycosylation occurs at asparagine 143. Residues 183–302 (PPHTVTHSTP…GSPASGNNSV (120 aa)) are disordered. Residues 186-198 (TVTHSTPSSSTVP) are compositionally biased toward low complexity. Residues 244–262 (PSSKLPSAGNATAPSNTRI) are compositionally biased toward polar residues. A glycan (N-linked (GlcNAc...) asparagine) is linked at asparagine 253. Composition is skewed to low complexity over residues 272 to 282 (DDGTLLTTKSS) and 290 to 301 (ASNGSPASGNNS). N-linked (GlcNAc...) asparagine glycosylation is found at asparagine 299, asparagine 338, asparagine 395, asparagine 652, asparagine 701, and asparagine 728. The segment at 373–397 (YDEYDDDPSSTTPAPSGGDCLHNSS) is disordered. The 195-residue stretch at 558 to 752 (RSVVQKVKNI…AILMDVVDEH (195 aa)) folds into the GAIN-B domain. Intrachain disulfides connect cysteine 707–cysteine 734 and cysteine 722–cysteine 736. The GPS stretch occupies residues 707 to 752 (CVFWNYIDHAWSANGCSLESTNRTHSVCSCNHLTNFAILMDVVDEH). The chain crosses the membrane as a helical span at residues 766 to 786 (VFIYISIAICVVFIVIALLTL). The Cytoplasmic portion of the chain corresponds to 787 to 799 (KLFNGVFVKSART). A helical membrane pass occupies residues 800–820 (TIYTSIYVCLLAIELLFLLGI). Over 821-826 (EQTETS) the chain is Extracellular. Residues 827–847 (IFCGFITVFLHCAILSGAAWF) form a helical membrane-spanning segment. Topologically, residues 848–873 (CYEAFHSYYTLTSDELLVEVDQTPKV) are cytoplasmic. The helical transmembrane segment at 874 to 894 (NWYYLLSYGLSVSVVAISVAI) threads the bilayer. Residues 895 to 911 (NPSTYTQNDYCVLMEAN) are Extracellular-facing. Residues 912 to 932 (ILFYATFVAPVLIFFVAAIGY) traverse the membrane as a helical segment. At 933 to 966 (TFLSWIIMCRKSCTGLKTKEHTRLASVRFDIRCS) the chain is on the cytoplasmic side. The helical transmembrane segment at 967-987 (FVFLLLLSAVWCSAYFYLRGA) threads the bilayer. The Extracellular portion of the chain corresponds to 988–994 (KTDEDTT). Residues 995 to 1015 (TIYGYCFICFNTLLGLYIFVF) traverse the membrane as a helical segment. Topologically, residues 1016–1714 (HCIQNEKIRR…VRCYLEPLAK (699 aa)) are cytoplasmic. A phosphoserine mark is found at serine 1155, serine 1245, and serine 1252. Disordered regions lie at residues 1229–1253 (PNSQ…LHSR), 1268–1287 (KTKQ…LDPP), 1293–1354 (AFYQ…PPPH), 1447–1536 (GGGS…DERM), and 1551–1694 (FQRQ…QQRH). Residues 1296–1315 (QQQQQMRRQQQQQQQQQQQQ) are compositionally biased toward low complexity. Serine 1317 and serine 1318 each carry phosphoserine. Low complexity-rich tracts occupy residues 1330 to 1348 (LHLQ…QQQL) and 1453 to 1478 (GGSV…QQQR). Acidic residues-rich tracts occupy residues 1486–1500 (DDDD…DEAT) and 1510–1523 (CDDD…DLDD). The span at 1524–1536 (DAHKLPPQSDERM) shows a compositional bias: basic and acidic residues. Low complexity predominate over residues 1565–1580 (GALPPGVAPGAGSAGP). A compositionally biased stretch (polar residues) spans 1644–1659 (QTPAQKRQQLQKLSPQ). Positions 1660-1675 (STTSSSSHTSHSNLQP) are enriched in low complexity. A compositionally biased stretch (basic residues) spans 1679-1693 (PLTHQHPHPPQHQQR).

The protein belongs to the G-protein coupled receptor 2 family. LN-TM7 subfamily. As to quaternary structure, forms a heterodimer, consisting of a large extracellular region non-covalently linked to a seven-transmembrane moiety. Post-translationally, proteolytically cleaved into 2 subunits, an extracellular subunit and a seven-transmembrane subunit.

Its subcellular location is the cell membrane. The sequence is that of Latrophilin Cirl from Drosophila ananassae (Fruit fly).